The chain runs to 570 residues: Proline--tRNA ligase (570 aa).

This sequence belongs to the class-II aminoacyl-tRNA synthetase family. ProS type 1 subfamily. In terms of assembly, homodimer.

The protein localises to the cytoplasm. It carries out the reaction tRNA(Pro) + L-proline + ATP = L-prolyl-tRNA(Pro) + AMP + diphosphate. Functionally, catalyzes the attachment of proline to tRNA(Pro) in a two-step reaction: proline is first activated by ATP to form Pro-AMP and then transferred to the acceptor end of tRNA(Pro). As ProRS can inadvertently accommodate and process non-cognate amino acids such as alanine and cysteine, to avoid such errors it has two additional distinct editing activities against alanine. One activity is designated as 'pretransfer' editing and involves the tRNA(Pro)-independent hydrolysis of activated Ala-AMP. The other activity is designated 'posttransfer' editing and involves deacylation of mischarged Ala-tRNA(Pro). The misacylated Cys-tRNA(Pro) is not edited by ProRS. This chain is Proline--tRNA ligase, found in Shewanella oneidensis (strain ATCC 700550 / JCM 31522 / CIP 106686 / LMG 19005 / NCIMB 14063 / MR-1).